Reading from the N-terminus, the 228-residue chain is Leucyl/phenylalanyl-tRNA--protein transferase (228 aa).

Belongs to the L/F-transferase family.

It is found in the cytoplasm. It carries out the reaction N-terminal L-lysyl-[protein] + L-leucyl-tRNA(Leu) = N-terminal L-leucyl-L-lysyl-[protein] + tRNA(Leu) + H(+). The enzyme catalyses N-terminal L-arginyl-[protein] + L-leucyl-tRNA(Leu) = N-terminal L-leucyl-L-arginyl-[protein] + tRNA(Leu) + H(+). The catalysed reaction is L-phenylalanyl-tRNA(Phe) + an N-terminal L-alpha-aminoacyl-[protein] = an N-terminal L-phenylalanyl-L-alpha-aminoacyl-[protein] + tRNA(Phe). Functionally, functions in the N-end rule pathway of protein degradation where it conjugates Leu, Phe and, less efficiently, Met from aminoacyl-tRNAs to the N-termini of proteins containing an N-terminal arginine or lysine. In Thiobacillus denitrificans (strain ATCC 25259 / T1), this protein is Leucyl/phenylalanyl-tRNA--protein transferase.